The primary structure comprises 350 residues: Nicotinate-nucleotide--dimethylbenzimidazole phosphoribosyltransferase (350 aa).

The Proton acceptor role is filled by E317.

It belongs to the CobT family.

The enzyme catalyses 5,6-dimethylbenzimidazole + nicotinate beta-D-ribonucleotide = alpha-ribazole 5'-phosphate + nicotinate + H(+). The protein operates within nucleoside biosynthesis; alpha-ribazole biosynthesis; alpha-ribazole from 5,6-dimethylbenzimidazole: step 1/2. Functionally, catalyzes the synthesis of alpha-ribazole-5'-phosphate from nicotinate mononucleotide (NAMN) and 5,6-dimethylbenzimidazole (DMB). This chain is Nicotinate-nucleotide--dimethylbenzimidazole phosphoribosyltransferase, found in Shewanella sp. (strain MR-7).